The following is a 217-amino-acid chain: Thiopurine S-methyltransferase (217 aa).

Residues W10, L45, E66, and R123 each coordinate S-adenosyl-L-methionine.

It belongs to the class I-like SAM-binding methyltransferase superfamily. TPMT family.

It is found in the cytoplasm. The catalysed reaction is S-adenosyl-L-methionine + a thiopurine = S-adenosyl-L-homocysteine + a thiopurine S-methylether.. This Pseudomonas fluorescens (strain Pf0-1) protein is Thiopurine S-methyltransferase.